The primary structure comprises 319 residues: Myoblast determination protein 1 (319 aa).

A Peptide (Met-Gly) (interchain with G-Cter in ubiquitin) cross-link involves residue M1. The residue at position 104 (K104) is an N6-methyllysine; by EHMT2. The region spanning 109–160 is the bHLH domain; sequence DRRKAATMRERRRLSKVNEAFETLKRCTSSNPNQRLPKVEILRNAIRYIEGL. Disordered stretches follow at residues 174–221 and 266–319; these read AAAA…SGAR and APAL…YQVL. Composition is skewed to polar residues over residues 197–207 and 308–319; these read SDASSPRSNCS and ASANPNPIYQVL.

Efficient DNA binding requires dimerization with another bHLH protein. Seems to form active heterodimers with ITF-2. Interacts with SUV39H1. Interacts with DDX5. Interacts with CHD2. Interacts with TSC22D3. Interacts with SETD3. Interacts with P-TEFB complex; promotes the transcriptional activity of MYOD1 through its CDK9-mediated phosphorylation. Interacts with CSRP3. Interacts with NUPR1. Phosphorylated by CDK9. This phosphorylation promotes its function in muscle differentiation. In terms of processing, acetylated by a complex containing EP300 and PCAF. The acetylation is essential to activate target genes. Conversely, its deacetylation by SIRT1 inhibits its function. Post-translationally, ubiquitinated on the N-terminus; which is required for proteasomal degradation. Methylation at Lys-104 by EHMT2/G9a inhibits myogenic activity.

It localises to the nucleus. Functionally, acts as a transcriptional activator that promotes transcription of muscle-specific target genes and plays a role in muscle differentiation. Together with MYF5 and MYOG, co-occupies muscle-specific gene promoter core region during myogenesis. Induces fibroblasts to differentiate into myoblasts. Interacts with and is inhibited by the twist protein. This interaction probably involves the basic domains of both proteins. This is Myoblast determination protein 1 (MYOD1) from Sus scrofa (Pig).